A 679-amino-acid polypeptide reads, in one-letter code: UvrABC system protein C (679 aa).

A GIY-YIG domain is found at 65–143 (NSPGVYRMLN…IKRLRPRFNV (79 aa)). The region spanning 253 to 288 (QKVKSHMAEAMNQAAEDLDFERAAIYRDRLAALSHV) is the UVR domain.

This sequence belongs to the UvrC family. In terms of assembly, interacts with UvrB in an incision complex.

Its subcellular location is the cytoplasm. The UvrABC repair system catalyzes the recognition and processing of DNA lesions. UvrC both incises the 5' and 3' sides of the lesion. The N-terminal half is responsible for the 3' incision and the C-terminal half is responsible for the 5' incision. In Rhizobium etli (strain ATCC 51251 / DSM 11541 / JCM 21823 / NBRC 15573 / CFN 42), this protein is UvrABC system protein C.